We begin with the raw amino-acid sequence, 137 residues long: Large ribosomal subunit protein uL16 (137 aa).

This sequence belongs to the universal ribosomal protein uL16 family. Part of the 50S ribosomal subunit.

Functionally, binds 23S rRNA and is also seen to make contacts with the A and possibly P site tRNAs. The chain is Large ribosomal subunit protein uL16 from Sinorhizobium medicae (strain WSM419) (Ensifer medicae).